The chain runs to 660 residues: Bifunctional polymyxin resistance protein ArnA (660 aa).

A formyltransferase ArnAFT region spans residues 1-304; sequence MKTVVFAYHD…TLGLVQGSRL (304 aa). 86 to 88 provides a ligand contact to (6R)-10-formyltetrahydrofolate; sequence HLI. The Proton donor; for formyltransferase activity role is filled by His104. (6R)-10-formyltetrahydrofolate-binding positions include Arg114 and 136–140; that span reads VTRAD. The dehydrogenase ArnADH stretch occupies residues 314–660; sequence RRTRVLILGV…RTVDLTDKPS (347 aa). Residues Asp347 and 368-369 each bind NAD(+); that span reads DI. Residues Ala393, Tyr398, and 432–433 contribute to the UDP-alpha-D-glucuronate site; that span reads TS. Glu434 (proton acceptor; for decarboxylase activity) is an active-site residue. UDP-alpha-D-glucuronate contacts are provided by residues Arg460, Asn492, 526 to 535, and Tyr613; that span reads KLIDGGKQKR. Residue Arg619 is the Proton donor; for decarboxylase activity of the active site.

This sequence in the N-terminal section; belongs to the Fmt family. UDP-L-Ara4N formyltransferase subfamily. The protein in the C-terminal section; belongs to the NAD(P)-dependent epimerase/dehydratase family. UDP-glucuronic acid decarboxylase subfamily. Homohexamer, formed by a dimer of trimers.

It carries out the reaction UDP-alpha-D-glucuronate + NAD(+) = UDP-beta-L-threo-pentopyranos-4-ulose + CO2 + NADH. The enzyme catalyses UDP-4-amino-4-deoxy-beta-L-arabinose + (6R)-10-formyltetrahydrofolate = UDP-4-deoxy-4-formamido-beta-L-arabinose + (6S)-5,6,7,8-tetrahydrofolate + H(+). It participates in nucleotide-sugar biosynthesis; UDP-4-deoxy-4-formamido-beta-L-arabinose biosynthesis; UDP-4-deoxy-4-formamido-beta-L-arabinose from UDP-alpha-D-glucuronate: step 1/3. Its pathway is nucleotide-sugar biosynthesis; UDP-4-deoxy-4-formamido-beta-L-arabinose biosynthesis; UDP-4-deoxy-4-formamido-beta-L-arabinose from UDP-alpha-D-glucuronate: step 3/3. It functions in the pathway bacterial outer membrane biogenesis; lipopolysaccharide biosynthesis. In terms of biological role, bifunctional enzyme that catalyzes the oxidative decarboxylation of UDP-glucuronic acid (UDP-GlcUA) to UDP-4-keto-arabinose (UDP-Ara4O) and the addition of a formyl group to UDP-4-amino-4-deoxy-L-arabinose (UDP-L-Ara4N) to form UDP-L-4-formamido-arabinose (UDP-L-Ara4FN). The modified arabinose is attached to lipid A and is required for resistance to polymyxin and cationic antimicrobial peptides. This chain is Bifunctional polymyxin resistance protein ArnA, found in Shigella dysenteriae serotype 1 (strain Sd197).